Reading from the N-terminus, the 98-residue chain is DNA-binding protein Fis (98 aa).

Positions 74–93 form a DNA-binding region, H-T-H motif; it reads QTRAAQMMGINRGTLRKKLK.

This sequence belongs to the transcriptional regulatory Fis family. Homodimer.

Functionally, activates ribosomal RNA transcription. Plays a direct role in upstream activation of rRNA promoters. The protein is DNA-binding protein Fis of Sodalis glossinidius (strain morsitans).